A 530-amino-acid polypeptide reads, in one-letter code: Ubiquitin carboxyl-terminal hydrolase 17-like protein 5 (530 aa).

Residues A80 to K375 enclose the USP domain. The active-site Nucleophile is C89. H334 acts as the Proton acceptor in catalysis. Basic and acidic residues-rich tracts occupy residues S382–R392 and D398–H412. Disordered stretches follow at residues S382–H412 and N477–Q530. Positions T493–L505 are enriched in polar residues. The segment covering G510–R524 has biased composition (basic residues).

The protein belongs to the peptidase C19 family. USP17 subfamily.

The protein localises to the nucleus. The protein resides in the endoplasmic reticulum. It carries out the reaction Thiol-dependent hydrolysis of ester, thioester, amide, peptide and isopeptide bonds formed by the C-terminal Gly of ubiquitin (a 76-residue protein attached to proteins as an intracellular targeting signal).. Deubiquitinating enzyme that removes conjugated ubiquitin from specific proteins to regulate different cellular processes that may include cell proliferation, progression through the cell cycle, apoptosis, cell migration, and the cellular response to viral infection. This chain is Ubiquitin carboxyl-terminal hydrolase 17-like protein 5 (USP17L5), found in Homo sapiens (Human).